The primary structure comprises 391 residues: Succinate--CoA ligase [ADP-forming] subunit beta (391 aa).

An ATP-grasp domain is found at 9–247 (KDILAKYGVA…IAEEDPLEVE (239 aa)). ATP-binding positions include lysine 49, 56-58 (GRG), glutamate 102, alanine 105, and glutamate 110. Mg(2+) is bound by residues asparagine 202 and aspartate 216. Residues asparagine 267 and 324 to 326 (GIL) each bind substrate.

It belongs to the succinate/malate CoA ligase beta subunit family. In terms of assembly, heterotetramer of two alpha and two beta subunits. It depends on Mg(2+) as a cofactor.

The catalysed reaction is succinate + ATP + CoA = succinyl-CoA + ADP + phosphate. It catalyses the reaction GTP + succinate + CoA = succinyl-CoA + GDP + phosphate. Its pathway is carbohydrate metabolism; tricarboxylic acid cycle; succinate from succinyl-CoA (ligase route): step 1/1. Succinyl-CoA synthetase functions in the citric acid cycle (TCA), coupling the hydrolysis of succinyl-CoA to the synthesis of either ATP or GTP and thus represents the only step of substrate-level phosphorylation in the TCA. The beta subunit provides nucleotide specificity of the enzyme and binds the substrate succinate, while the binding sites for coenzyme A and phosphate are found in the alpha subunit. This chain is Succinate--CoA ligase [ADP-forming] subunit beta, found in Acidobacterium capsulatum (strain ATCC 51196 / DSM 11244 / BCRC 80197 / JCM 7670 / NBRC 15755 / NCIMB 13165 / 161).